The following is a 445-amino-acid chain: tRNA-2-methylthio-N(6)-dimethylallyladenosine synthase (445 aa).

An MTTase N-terminal domain is found at 4–121 (NKIYIKTWGC…LPNMIQEVKK (118 aa)). [4Fe-4S] cluster contacts are provided by Cys-13, Cys-50, Cys-84, Cys-158, Cys-162, and Cys-165. The Radical SAM core domain maps to 144 to 376 (RKPKVTAFVS…QTLIRNNTTM (233 aa)). In terms of domain architecture, TRAM spans 379-442 (QKMLGSIQSV…PNSLRGSYEK (64 aa)).

It belongs to the methylthiotransferase family. MiaB subfamily. As to quaternary structure, monomer. The cofactor is [4Fe-4S] cluster.

The protein resides in the cytoplasm. The enzyme catalyses N(6)-dimethylallyladenosine(37) in tRNA + (sulfur carrier)-SH + AH2 + 2 S-adenosyl-L-methionine = 2-methylsulfanyl-N(6)-dimethylallyladenosine(37) in tRNA + (sulfur carrier)-H + 5'-deoxyadenosine + L-methionine + A + S-adenosyl-L-homocysteine + 2 H(+). Catalyzes the methylthiolation of N6-(dimethylallyl)adenosine (i(6)A), leading to the formation of 2-methylthio-N6-(dimethylallyl)adenosine (ms(2)i(6)A) at position 37 in tRNAs that read codons beginning with uridine. The protein is tRNA-2-methylthio-N(6)-dimethylallyladenosine synthase of Buchnera aphidicola subsp. Baizongia pistaciae (strain Bp).